Reading from the N-terminus, the 510-residue chain is Probable DNA ligase (510 aa).

Glutamate 210 lines the ATP pocket. Catalysis depends on lysine 212, which acts as the N6-AMP-lysine intermediate. ATP is bound by residues arginine 217, arginine 232, glutamate 261, phenylalanine 296, arginine 367, and lysine 373.

This sequence belongs to the ATP-dependent DNA ligase family. Mg(2+) is required as a cofactor.

The enzyme catalyses ATP + (deoxyribonucleotide)n-3'-hydroxyl + 5'-phospho-(deoxyribonucleotide)m = (deoxyribonucleotide)n+m + AMP + diphosphate.. DNA ligase that seals nicks in double-stranded DNA during DNA replication, DNA recombination and DNA repair. The polypeptide is Probable DNA ligase (Saccharopolyspora erythraea (strain ATCC 11635 / DSM 40517 / JCM 4748 / NBRC 13426 / NCIMB 8594 / NRRL 2338)).